The primary structure comprises 210 residues: uncharacterized protein (210 aa).

Residues 101–114 are compositionally biased toward low complexity; the sequence is QELPEPSSPQSQSS. The tract at residues 101 to 166 is disordered; the sequence is QELPEPSSPQ…SSGVSSDLQK (66 aa). The span at 147-164 shows a compositional bias: polar residues; that stretch reads RSTSPVTASTSSGVSSDL.

This is an uncharacterized protein from Alcelaphine herpesvirus 1 (strain C500) (AlHV-1).